The primary structure comprises 874 residues: Lon protease (874 aa).

One can recognise a Lon N-terminal domain in the interval Leu18–Leu261. 3 disordered regions span residues Val47–Ser68, Gly120–Gly144, and Leu298–Asp318. A compositionally biased stretch (low complexity) spans Pro124–Gly142. An ATP-binding site is contributed by Gly430–Thr437. The region spanning Thr667–Pro851 is the Lon proteolytic domain. Catalysis depends on residues Ser757 and Lys800. The interval Phe853–Ala874 is disordered.

The protein belongs to the peptidase S16 family. In terms of assembly, homohexamer. Organized in a ring with a central cavity.

It is found in the cytoplasm. It carries out the reaction Hydrolysis of proteins in presence of ATP.. In terms of biological role, ATP-dependent serine protease that mediates the selective degradation of mutant and abnormal proteins as well as certain short-lived regulatory proteins. Required for cellular homeostasis and for survival from DNA damage and developmental changes induced by stress. Degrades polypeptides processively to yield small peptide fragments that are 5 to 10 amino acids long. Binds to DNA in a double-stranded, site-specific manner. This chain is Lon protease, found in Frankia alni (strain DSM 45986 / CECT 9034 / ACN14a).